Here is a 186-residue protein sequence, read N- to C-terminus: Large ribosomal subunit protein uL5 (186 aa).

The protein belongs to the universal ribosomal protein uL5 family. Part of the 50S ribosomal subunit; contacts the 5S rRNA and probably tRNA. Forms a bridge to the 30S subunit in the 70S ribosome.

Its function is as follows. This is one of the proteins that bind and probably mediate the attachment of the 5S RNA into the large ribosomal subunit, where it forms part of the central protuberance. In the 70S ribosome it contacts protein S13 of the 30S subunit (bridge B1b), connecting the 2 subunits; this bridge is implicated in subunit movement. May contact the P site tRNA; the 5S rRNA and some of its associated proteins might help stabilize positioning of ribosome-bound tRNAs. The sequence is that of Large ribosomal subunit protein uL5 from Methanopyrus kandleri (strain AV19 / DSM 6324 / JCM 9639 / NBRC 100938).